A 187-amino-acid chain; its full sequence is Ubiquinol-cytochrome c reductase iron-sulfur subunit (187 aa).

A helical membrane pass occupies residues 15 to 35; the sequence is LYYATAGAGAVATGAAVWPLI. The Rieske domain maps to 89–185; it reads QLGQLVDTNA…AKFIDETTIQ (97 aa). [2Fe-2S] cluster is bound by residues Cys129, His131, Cys149, and His152. A disulfide bridge links Cys134 with Cys151.

This sequence belongs to the Rieske iron-sulfur protein family. As to quaternary structure, the main subunits of complex b-c1 are: cytochrome b, cytochrome c1 and the Rieske protein. [2Fe-2S] cluster serves as cofactor.

Its subcellular location is the cell membrane. The enzyme catalyses a quinol + 2 Fe(III)-[cytochrome c](out) = a quinone + 2 Fe(II)-[cytochrome c](out) + 2 H(+)(out). Functionally, component of the ubiquinol-cytochrome c reductase complex (complex III or cytochrome b-c1 complex), which is a respiratory chain that generates an electrochemical potential coupled to ATP synthesis. The sequence is that of Ubiquinol-cytochrome c reductase iron-sulfur subunit (petA) from Cereibacter sphaeroides (Rhodobacter sphaeroides).